A 366-amino-acid chain; its full sequence is Alanine racemase (366 aa).

Lysine 35 (proton acceptor; specific for D-alanine) is an active-site residue. Lysine 35 carries the N6-(pyridoxal phosphate)lysine modification. Substrate is bound at residue arginine 130. The Proton acceptor; specific for L-alanine role is filled by tyrosine 254. Methionine 302 serves as a coordination point for substrate.

The protein belongs to the alanine racemase family. Requires pyridoxal 5'-phosphate as cofactor.

The catalysed reaction is L-alanine = D-alanine. The protein operates within amino-acid biosynthesis; D-alanine biosynthesis; D-alanine from L-alanine: step 1/1. In terms of biological role, catalyzes the interconversion of L-alanine and D-alanine. May also act on other amino acids. The chain is Alanine racemase (alr) from Variovorax paradoxus (strain S110).